The sequence spans 163 residues: Ribonuclease P protein component 4 (163 aa).

Residues Cys66, Cys69, Cys96, and Cys99 each coordinate Zn(2+). The segment at 110-163 is disordered; it reads GPRGGAPISPPAAEYGSGGRDSGEREDKGPQGPPRQGGRDNRQGGGHQGGPKGD. Positions 152–163 are enriched in gly residues; that stretch reads QGGGHQGGPKGD.

Belongs to the eukaryotic/archaeal RNase P protein component 4 family. In terms of assembly, consists of a catalytic RNA component and at least 4-5 protein subunits. Zn(2+) serves as cofactor.

The protein localises to the cytoplasm. The enzyme catalyses Endonucleolytic cleavage of RNA, removing 5'-extranucleotides from tRNA precursor.. In terms of biological role, part of ribonuclease P, a protein complex that generates mature tRNA molecules by cleaving their 5'-ends. This chain is Ribonuclease P protein component 4, found in Aeropyrum pernix (strain ATCC 700893 / DSM 11879 / JCM 9820 / NBRC 100138 / K1).